A 1007-amino-acid polypeptide reads, in one-letter code: MNMPSWLIFLLTGWTFCGNFFACGGLDYDYPNYENEEEKNEAIDYKDPCKAVVFWGDIALDEEDLKMFHIDRTIDLTQHSNEKLGHTTGGLEEHDLSKKRGALYQLIERIRRFGSGQENTTANSQKVDNNQSGKSKKIRIPRAATSRTERIWPGGVIPYVIGGNFTGSQRAMFKQAMRHWEKHTCVTFIERTDEESYIVFTYRPCGCCSYVGRRGNGPQAISIGKNCDKFGIVVHELGHVIGFWHEHTRPDRDDHVTIIRENIQPGQEYNFLKMEPGEVHSLGESYDFDSIMHYARNTFSRGMFLDTILPSRDENGLRPPIGQRTRLSKGDIAQARKLYRCPACGETLQESTGNFSSPGFPNGYPSYTHCIWRISVTPGEKIVLNFTTMDLYKSSLCWYDYIEVRDGYWKKSPLLGRFCGDKLPDVLTSTDSRMWIEFRSSSNWVGKGFAAVYEAICGGEIHKDAGQIQSPNYPDDYRPLKECVWKITVAENYNVGLTFQAFEIERHDNCAYDYLEVRDGSSENSPLIGHFCGYDKPEDIRSTSNTLWMKFVSDGTVNKAGFAANFLKEEDECARPDNGGCEQRCVNTLGSYKCSCDPGYELAPDKKSCEAACGGLLTKLNGTITTPAWPKEYPPNKNCVWQVVAPSQYRISMKFDYFELEGNEVCKYDYVEVRSGLSSDSKLHGKFCGTEVPEVITSQFNNMRIEFKSDNTVSKKGFRAHFFSDKDECSKDNGGCQHECINTIGSYVCQCRNGFVLHDNKHDCKEAECEHRIHSSNGVITSPNWPDKYPSRKECTWEISATPGHRVKLSFSEFEIEQHQECAYDHLEVFDGETEKSSILGRLCGSKVPEPLVATGNEMFIRFVSDASVQRKGFQATHSTECGGRLKAEAKPRDLFSHAQFGDNNYPVQADCEWILMTERGLRIELNFQTFEVEEEADCGYDFMELFDGHDASAMRLGRFCGSGPPEEIVSTGDAVLIHFHTDDTISKKGFHIRYRSVKYQDILHTK.

The first 25 residues, 1–25, serve as a signal peptide directing secretion; that stretch reads MNMPSWLIFLLTGWTFCGNFFACGG. Residues 26-142 constitute a propeptide that is removed on maturation; that stretch reads LDYDYPNYEN…GKSKKIRIPR (117 aa). The segment at 115-139 is disordered; the sequence is SGQENTTANSQKVDNNQSGKSKKIR. The span at 116–133 shows a compositional bias: polar residues; that stretch reads GQENTTANSQKVDNNQSG. In terms of domain architecture, Peptidase M12A spans 143–342; that stretch reads AATSRTERIW…AQARKLYRCP (200 aa). Residue asparagine 164 is glycosylated (N-linked (GlcNAc...) asparagine). 4 disulfide bridges follow: cysteine 185–cysteine 341, cysteine 205–cysteine 227, cysteine 207–cysteine 208, and cysteine 344–cysteine 370. Zn(2+) is bound at residue histidine 235. The active site involves glutamate 236. Histidine 239 and histidine 245 together coordinate Zn(2+). 2 CUB domains span residues 344-456 and 457-569; these read CGET…YEAI and CGGE…FLKE. N-linked (GlcNAc...) asparagine glycans are attached at residues asparagine 354 and asparagine 385. Cystine bridges form between cysteine 397–cysteine 419, cysteine 457–cysteine 483, cysteine 510–cysteine 532, cysteine 573–cysteine 585, cysteine 581–cysteine 594, cysteine 596–cysteine 609, cysteine 613–cysteine 639, cysteine 666–cysteine 688, cysteine 729–cysteine 740, cysteine 736–cysteine 749, cysteine 751–cysteine 764, cysteine 769–cysteine 795, cysteine 822–cysteine 844, cysteine 882–cysteine 912, and cysteine 939–cysteine 961. The 42-residue stretch at 569–610 folds into the EGF-like 1; calcium-binding domain; the sequence is EEDECARPDNGGCEQRCVNTLGSYKCSCDPGYELAPDKKSCE. The region spanning 613–725 is the CUB 3 domain; the sequence is CGGLLTKLNG…KGFRAHFFSD (113 aa). N-linked (GlcNAc...) asparagine glycosylation is present at asparagine 621. An EGF-like 2; calcium-binding domain is found at 725-765; the sequence is DKDECSKDNGGCQHECINTIGSYVCQCRNGFVLHDNKHDCK. 2 CUB domains span residues 769–881 and 882–998; these read CEHR…HSTE and CGGR…YRSV.

Requires Zn(2+) as cofactor.

It localises to the secreted. Its function is as follows. Protease which processes procollagen C-propeptides, such as chordin. Required for the embryonic development. Predominant protease, which in the development, influences dorsal-ventral patterning and skeletogenesis. The protein is Tolloid-like protein 1 (tll1) of Xenopus laevis (African clawed frog).